The chain runs to 194 residues: HTH-type nicotine-responsive transcriptional repressor HdnoR (194 aa).

The 61-residue stretch at 6-66 (VDRRQQLIDA…AAAAELLQQL (61 aa)) folds into the HTH tetR-type domain. The H-T-H motif DNA-binding region spans 29-48 (SLRTIASEAKASLAAVHVCF).

As to quaternary structure, homodimer.

6-hydroxy-D-nicotine and 6-hydroxy-L-nicotine prevent HdnoR from binding to the IR1 DNA. Both 6-hydroxy-nicotine enantiomers prevent DNA-protein complex formation at micromolar concentrations, with the D-enantiomer being twice as potent as the L-enantiomer. A thousand-fold higher L-nicotine concentration is required to elicit a similar effect. Represses expression of the 6-hydroxy-D-nicotine oxidase (6-hdno). Acts by binding to a gene operator site consisting of two inverted repeats, IR1 (covering the 6-hdno promoter region) and IR2 (situated upstream from the 6-hdno promoter). Binding to one site may stimulate binding of the protein to the second site. This is HTH-type nicotine-responsive transcriptional repressor HdnoR from Paenarthrobacter nicotinovorans (Arthrobacter nicotinovorans).